We begin with the raw amino-acid sequence, 159 residues long: ATP synthase subunit b 2 (159 aa).

The helical transmembrane segment at 1–21 threads the bilayer; it reads MDATFWAFIALVIFVAIVVYM.

This sequence belongs to the ATPase B chain family. F-type ATPases have 2 components, F(1) - the catalytic core - and F(0) - the membrane proton channel. F(1) has five subunits: alpha(3), beta(3), gamma(1), delta(1), epsilon(1). F(0) has three main subunits: a(1), b(2) and c(10-14). The alpha and beta chains form an alternating ring which encloses part of the gamma chain. F(1) is attached to F(0) by a central stalk formed by the gamma and epsilon chains, while a peripheral stalk is formed by the delta and b chains.

It localises to the cell inner membrane. Its function is as follows. F(1)F(0) ATP synthase produces ATP from ADP in the presence of a proton or sodium gradient. F-type ATPases consist of two structural domains, F(1) containing the extramembraneous catalytic core and F(0) containing the membrane proton channel, linked together by a central stalk and a peripheral stalk. During catalysis, ATP synthesis in the catalytic domain of F(1) is coupled via a rotary mechanism of the central stalk subunits to proton translocation. Functionally, component of the F(0) channel, it forms part of the peripheral stalk, linking F(1) to F(0). The sequence is that of ATP synthase subunit b 2 from Brucella suis (strain ATCC 23445 / NCTC 10510).